Consider the following 274-residue polypeptide: tRNA-cytidine(32) 2-sulfurtransferase (274 aa).

The short motif at 40 to 45 (SGGKDS) is the PP-loop motif element. Cys115, Cys118, and Cys206 together coordinate [4Fe-4S] cluster.

The protein belongs to the TtcA family. In terms of assembly, homodimer. Mg(2+) serves as cofactor. [4Fe-4S] cluster is required as a cofactor.

The protein resides in the cytoplasm. The enzyme catalyses cytidine(32) in tRNA + S-sulfanyl-L-cysteinyl-[cysteine desulfurase] + AH2 + ATP = 2-thiocytidine(32) in tRNA + L-cysteinyl-[cysteine desulfurase] + A + AMP + diphosphate + H(+). It participates in tRNA modification. In terms of biological role, catalyzes the ATP-dependent 2-thiolation of cytidine in position 32 of tRNA, to form 2-thiocytidine (s(2)C32). The sulfur atoms are provided by the cysteine/cysteine desulfurase (IscS) system. This chain is tRNA-cytidine(32) 2-sulfurtransferase, found in Pseudomonas putida (strain ATCC 47054 / DSM 6125 / CFBP 8728 / NCIMB 11950 / KT2440).